The chain runs to 612 residues: U-box domain-containing protein 11 (612 aa).

Positions 127 to 196 (DEVGEQVELA…LHFGEEEEKQ (70 aa)) form a coiled coil. The region spanning 240-314 (TIPVDFLCPV…SRWCAEHNIE (75 aa)) is the U-box domain. 5 ARM repeats span residues 363–402 (TDNR…NLSI), 404–443 (ENNK…SLSL), 445–484 (DENK…NLCI), 486–526 (HGNK…VLAN), and 528–567 (QDAK…SLCK).

The catalysed reaction is S-ubiquitinyl-[E2 ubiquitin-conjugating enzyme]-L-cysteine + [acceptor protein]-L-lysine = [E2 ubiquitin-conjugating enzyme]-L-cysteine + N(6)-ubiquitinyl-[acceptor protein]-L-lysine.. Its pathway is protein modification; protein ubiquitination. Functions as an E3 ubiquitin ligase. The protein is U-box domain-containing protein 11 (PUB11) of Arabidopsis thaliana (Mouse-ear cress).